The following is a 1166-amino-acid chain: Serine-aspartate repeat-containing protein E (1166 aa).

The first 52 residues, 1–52 (MINRDNKKAITKKGMISNRLNKFSIRKYTVGTASILVGTTLIFGLGNQEAKA), serve as a signal peptide directing secretion. The YSIRK-G/S signaling motif signature appears at 23-34 (FSIRKYTVGTAS). The tract at residues 53-606 (AENTSTENAK…GDGTVKPEEK (554 aa)) is ligand binding A region. The tract at residues 54–253 (ENTSTENAKQ…HSTKPVATAP (200 aa)) is disordered. A compositionally biased stretch (basic and acidic residues) spans 61–75 (AKQDDATTSDNKEVV). Residues 77-90 (ETENNSTTENNSTN) are compositionally biased toward low complexity. Basic and acidic residues predominate over residues 92-108 (IKKETNTDSQPEAKKES). The span at 118–129 (NNVTATTETKPQ) shows a compositional bias: polar residues. Residues 130 to 145 (NIEKENVKPSTDKTAT) show a composition bias toward basic and acidic residues. A compositionally biased stretch (low complexity) spans 166 to 178 (TTKPSTSEPSTSE). Polar residues predominate over residues 179–212 (IQTKPTTPQESTNIENSQPQPTPSKVDNQVTDAT). Positions 221–246 (SKEELKKNPEKLKELVRNDSNTDHST) are enriched in basic and acidic residues. CNA-B domains follow at residues 607–719 (LYKI…YKEP), 720–829 (KYNL…YKTP), and 830–940 (KYSL…EEDT). The disordered stretch occupies residues 904–1141 (VTNTTEDDKD…TGSENNGSNN (238 aa)). Acidic residues-rich tracts occupy residues 908-918 (TEDDKDADGGE) and 935-1105 (YFEE…DSDS). The short motif at 1129-1133 (LPETG) is the LPXTG sorting signal element. A Pentaglycyl murein peptidoglycan amidated threonine modification is found at threonine 1132. Positions 1133–1166 (GSENNGSNNATLFGGLFAALGSLLLFGRRKKQNK) are cleaved as a propeptide — removed by sortase.

Belongs to the serine-aspartate repeat-containing protein (SDr) family. As to quaternary structure, interacts with host complement factor H/CFAH (via C-terminus). Interacts with host complement regulator C4BPA.

The protein resides in the secreted. It localises to the cell wall. Its function is as follows. Cell surface-associated calcium-binding protein which plays an important role in adhesion and pathogenesis. Contributes to the resistance to killing by innate immune components in blood and thus attenuates bacterial clearance by interacting with host complement factor H/CFAH and modulating its activity. Also inhibits bacterial opsonization and killing by interacting with host complement regulator C4BPA and thus inhibiting classical complement pathway activation. The protein is Serine-aspartate repeat-containing protein E (sdrE) of Staphylococcus aureus (strain COL).